The primary structure comprises 291 residues: D-alanyl-D-alanine carboxypeptidase DacB2 (291 aa).

A signal peptide spans 1–22 (MRKLMTATAALCACAVTVSAGA). Residue Ser69 is the Acyl-ester intermediate of the active site. Lys72 serves as the catalytic Proton acceptor. Residue Ser124 is part of the active site.

This sequence belongs to the peptidase S11 family.

The protein localises to the periplasm. The protein operates within cell wall biogenesis; peptidoglycan biosynthesis. With respect to regulation, inhibited by the beta-lactam antibiotic meropenem. Inhibited by the non-specific inhibitor phenylmethylsulfonyl fluoride (PMSF). Its function is as follows. Probably cleaves the terminal D-Ala-D-Ala dipeptide of the peptidoglycan stem peptide. Shows significant D,D-carboxypeptidase activity in vitro. Acts on the synthetic penta-peptide substrate Penta-DAP (L-Ala-gamma-D-Gln-DAP-D-Ala-D-Ala). Also shows weak activity on Penta-Lys (L-Ala-gamma-Glu-L-Lys-D-Ala-D-Ala). The catalytic domain binds weakly to peptidoglycan in vitro. Plays an important role in the maintenance of colony morphology and cell wall permeability and integrity. The polypeptide is D-alanyl-D-alanine carboxypeptidase DacB2 (Mycobacterium tuberculosis (strain ATCC 25618 / H37Rv)).